Here is a 400-residue protein sequence, read N- to C-terminus: Coiled-coil domain-containing glutamate-rich protein 1 (400 aa).

Residues 1–11 are compositionally biased toward basic and acidic residues; the sequence is MTQTVNEREDP. Disordered stretches follow at residues 1-68, 134-164, and 203-353; these read MTQT…IPGP, RPPG…PPID, and QEKL…DKFL. The segment covering 31–45 has biased composition (basic residues); the sequence is YHRRQRGAPMSKRRY. The span at 46-57 shows a compositional bias: basic and acidic residues; it reads RDGPKTEYEAPR. A compositionally biased stretch (basic residues) spans 137–157; it reads GRKKRWGRRGRGLRRHPRRSF. Positions 209-220 are enriched in low complexity; the sequence is QQAALRAHQAQA. Positions 255-271 are enriched in polar residues; it reads PSLTFSPAPGQQNQSPT. Residues 275–347 show a composition bias toward acidic residues; sequence VEEEEKNVDD…EAGLEEGEQR (73 aa). Residues 299–335 adopt a coiled-coil conformation; sequence EEEEVDGESEDEDVDEEEVEEAGNGEEREEDQEEEDV.

The protein localises to the nucleus. Regulator of histone epigenetic modifications and chromatin compaction into the sperm head, required for histone-to-protamine (HTP) transition. HTP is a key event in which somatic histones are first replaced by testis-specific histone variants, then transition proteins (TNPs) are incorporated into the spermatid nucleus, and finally protamines (PRMs) replace the TNPs to promote chromatin condensation. In Rattus norvegicus (Rat), this protein is Coiled-coil domain-containing glutamate-rich protein 1 (Ccer1).